We begin with the raw amino-acid sequence, 325 residues long: Aerobic respiration control sensor protein ArcB homolog (325 aa).

The Cytoplasmic segment spans residues 1 to 26 (MKNFKYFAQSYVDWVIRLGRLRFSLL). The helical transmembrane segment at 27-47 (GVMILAVLALCTQILFSLFIV) threads the bilayer. Topologically, residues 48–57 (HQISWVDIFR) are periplasmic. A helical transmembrane segment spans residues 58-78 (SVTFGLLTAPFVIYFFTLLVE). At 79–325 (KLEHSRLDLS…AQLMGRGFNS (247 aa)) the chain is on the cytoplasmic side. In terms of domain architecture, Histidine kinase spans 128–325 (TISHEFRTPL…AQLMGRGFNS (198 aa)). The residue at position 131 (His-131) is a Phosphohistidine; by autocatalysis.

The protein resides in the cell inner membrane. The catalysed reaction is ATP + protein L-histidine = ADP + protein N-phospho-L-histidine.. Its function is as follows. Member of the two-component regulatory system ArcB/ArcA. Activates ArcA by phosphorylation. This is Aerobic respiration control sensor protein ArcB homolog (arcB) from Haemophilus influenzae (strain ATCC 51907 / DSM 11121 / KW20 / Rd).